A 402-amino-acid chain; its full sequence is MQKLTILGATGSIGASTLKVIEQNPDKFSVVALAADSNVEKMQQLCQRWQPEFAVMANKEAALRLKMALAVLAPNTQVLGGQEALCYVATLEQVDSVMAAIVGAAGLVPTMAAVKAGKRILLANKEALVMSGQLFIDEVEKSGAQLLPVDSEHNAIFQCLPQAVQGNLGRCDLASQGVSHILLTGSGGPFRYTDVAELEAVTPEQAIAHPNWSMGPKISVDSATMMNKGLEYIEAKWLFNANRDQLKVIIHPQSVIHSMVQYLDGSVLAQMGEPDMATPIALTLSYPERVKAGVKPLDFTQVGELTFLQPDFERYPCLALAIEACYLGQHATTTLNAANEVAVAAFLARQIKFTDIARVNDSVLNQVCKQSLASGLDSLESLLELDRMARTLADEVVRERAQ.

NADPH-binding residues include Thr10, Gly11, Ser12, Ile13, Asn38, and Asn124. 1-deoxy-D-xylulose 5-phosphate is bound at residue Lys125. Glu126 serves as a coordination point for NADPH. Residue Asp150 coordinates Mn(2+). Residues Ser151, Glu152, Ser186, and His209 each contribute to the 1-deoxy-D-xylulose 5-phosphate site. Glu152 lines the Mn(2+) pocket. Gly215 serves as a coordination point for NADPH. Residues Ser222, Asn227, Lys228, and Glu231 each contribute to the 1-deoxy-D-xylulose 5-phosphate site. Glu231 is a Mn(2+) binding site.

It belongs to the DXR family. Mg(2+) serves as cofactor. It depends on Mn(2+) as a cofactor.

It carries out the reaction 2-C-methyl-D-erythritol 4-phosphate + NADP(+) = 1-deoxy-D-xylulose 5-phosphate + NADPH + H(+). It functions in the pathway isoprenoid biosynthesis; isopentenyl diphosphate biosynthesis via DXP pathway; isopentenyl diphosphate from 1-deoxy-D-xylulose 5-phosphate: step 1/6. Catalyzes the NADPH-dependent rearrangement and reduction of 1-deoxy-D-xylulose-5-phosphate (DXP) to 2-C-methyl-D-erythritol 4-phosphate (MEP). The chain is 1-deoxy-D-xylulose 5-phosphate reductoisomerase from Vibrio vulnificus (strain YJ016).